A 129-amino-acid chain; its full sequence is uncharacterized protein (129 aa).

Residues 6-129 (QVHHIAIIAT…DGLPLELYEQ (124 aa)) enclose the VOC domain. A divalent metal cation-binding residues include H9, E57, H78, and E125.

This sequence to B.subtilis YwkD.

This is an uncharacterized protein from Escherichia coli (strain K12).